The sequence spans 313 residues: Protoheme IX farnesyltransferase (313 aa).

A run of 9 helical transmembrane segments spans residues 29 to 49 (VISLLLWTTVTAMFMAARGWP), 57 to 77 (LWLLIVVSVAGYMSAGSAGVF), 101 to 123 (LISSRNAAIFGTTLQVLSFVMLW), 124 to 144 (VWGTPLAAWMSLAGFVFYVVI), 157 to 177 (IVIGGAAGCFPPLVGWAAVTG), 185 to 205 (YLFAIIFFWTPVHFWALALMI), 225 to 245 (MTVAQIGLYAIYTVVLSLMPV), 247 to 267 (FGAVSWIYFVSGALLGAWLLW), and 287 to 307 (AVPLYLYSMLYLALLFLAGAI).

This sequence belongs to the UbiA prenyltransferase family. Protoheme IX farnesyltransferase subfamily.

It localises to the cell membrane. It carries out the reaction heme b + (2E,6E)-farnesyl diphosphate + H2O = Fe(II)-heme o + diphosphate. It functions in the pathway porphyrin-containing compound metabolism; heme O biosynthesis; heme O from protoheme: step 1/1. In terms of biological role, converts heme B (protoheme IX) to heme O by substitution of the vinyl group on carbon 2 of heme B porphyrin ring with a hydroxyethyl farnesyl side group. The sequence is that of Protoheme IX farnesyltransferase from Deinococcus radiodurans (strain ATCC 13939 / DSM 20539 / JCM 16871 / CCUG 27074 / LMG 4051 / NBRC 15346 / NCIMB 9279 / VKM B-1422 / R1).